The primary structure comprises 159 residues: 6,7-dimethyl-8-ribityllumazine synthase (159 aa).

5-amino-6-(D-ribitylamino)uracil is bound by residues tryptophan 30, 64–66 (TFE), and 88–90 (CVI). A (2S)-2-hydroxy-3-oxobutyl phosphate-binding site is contributed by 93 to 94 (ET). Histidine 96 serves as the catalytic Proton donor. Phenylalanine 121 provides a ligand contact to 5-amino-6-(D-ribitylamino)uracil. A (2S)-2-hydroxy-3-oxobutyl phosphate-binding site is contributed by arginine 135.

Belongs to the DMRL synthase family.

It catalyses the reaction (2S)-2-hydroxy-3-oxobutyl phosphate + 5-amino-6-(D-ribitylamino)uracil = 6,7-dimethyl-8-(1-D-ribityl)lumazine + phosphate + 2 H2O + H(+). It participates in cofactor biosynthesis; riboflavin biosynthesis; riboflavin from 2-hydroxy-3-oxobutyl phosphate and 5-amino-6-(D-ribitylamino)uracil: step 1/2. Catalyzes the formation of 6,7-dimethyl-8-ribityllumazine by condensation of 5-amino-6-(D-ribitylamino)uracil with 3,4-dihydroxy-2-butanone 4-phosphate. This is the penultimate step in the biosynthesis of riboflavin. In Cytophaga hutchinsonii (strain ATCC 33406 / DSM 1761 / CIP 103989 / NBRC 15051 / NCIMB 9469 / D465), this protein is 6,7-dimethyl-8-ribityllumazine synthase.